A 427-amino-acid chain; its full sequence is 3-phosphoshikimate 1-carboxyvinyltransferase (427 aa).

3 residues coordinate 3-phosphoshikimate: lysine 22, serine 23, and arginine 27. Lysine 22 is a phosphoenolpyruvate binding site. Glycine 96 and arginine 124 together coordinate phosphoenolpyruvate. The 3-phosphoshikimate site is built by serine 169, serine 170, glutamine 171, serine 197, aspartate 313, asparagine 336, and lysine 340. Glutamine 171 lines the phosphoenolpyruvate pocket. The Proton acceptor role is filled by aspartate 313. Arginine 344, arginine 386, and lysine 411 together coordinate phosphoenolpyruvate.

Belongs to the EPSP synthase family. As to quaternary structure, monomer.

The protein localises to the cytoplasm. The catalysed reaction is 3-phosphoshikimate + phosphoenolpyruvate = 5-O-(1-carboxyvinyl)-3-phosphoshikimate + phosphate. Its pathway is metabolic intermediate biosynthesis; chorismate biosynthesis; chorismate from D-erythrose 4-phosphate and phosphoenolpyruvate: step 6/7. Functionally, catalyzes the transfer of the enolpyruvyl moiety of phosphoenolpyruvate (PEP) to the 5-hydroxyl of shikimate-3-phosphate (S3P) to produce enolpyruvyl shikimate-3-phosphate and inorganic phosphate. In Escherichia coli O127:H6 (strain E2348/69 / EPEC), this protein is 3-phosphoshikimate 1-carboxyvinyltransferase.